The chain runs to 589 residues: Leucine-rich repeat and immunoglobulin-like domain-containing nogo receptor-interacting protein 3 (589 aa).

A signal peptide spans 1–23; the sequence is MTCWLHMLGLHLLLLPTAPLAAG. Residues 24-53 enclose the LRRNT domain; the sequence is CPARCECSASTRTVACGRRRLTAIPEGIPA. Over 24–528 the chain is Extracellular; it reads CPARCECSAS…LDLTTILVST (505 aa). LRR repeat units lie at residues 54–75, 78–99, 102–123, 126–147, 150–171, 174–195, 206–227, 246–267, 270–291, 294–315, and 318–339; these read ETRM…DLAS, TLEE…AFAN, RLRV…VFTH, SLTL…SFQD, SLQR…AFAG, GLAE…SLGH, HLAI…SHLE, NLTS…ALRQ, HLTC…SFRD, RLRE…AFVG, and QIRL…TFHS. Asn-184 is a glycosylation site (N-linked (GlcNAc...) asparagine). 3 N-linked (GlcNAc...) asparagine glycosylation sites follow: Asn-246, Asn-256, and Asn-275. N-linked (GlcNAc...) asparagine glycosylation occurs at Asn-323. Residues 351–405 form the LRRCT domain; sequence NPLACDCRLLWIVQRRKTLNFDGRLPACATPAEVRGDALHNLPDSVLFEYFVCRK. An Ig-like C2-type domain is found at 406–495; sequence PKIRERRLQH…GNDTYFATLT (90 aa). Cysteines 428 and 479 form a disulfide. N-linked (GlcNAc...) asparagine glycosylation is found at Asn-487, Asn-501, and Asn-509. Residues 529–549 traverse the membrane as a helical segment; it reads AMGCITFLGVVLFCFLLLFVW. At 550 to 589 the chain is on the cytoplasmic side; the sequence is SRGRGQHKNNFSVEYSFRKVDGPAAAAGQGGARKFNMKMI.

It localises to the membrane. This Mus musculus (Mouse) protein is Leucine-rich repeat and immunoglobulin-like domain-containing nogo receptor-interacting protein 3 (Lingo3).